The chain runs to 232 residues: MAKLSKRLQAFAAKVDRQKLYAIDEALSLVKECASAKFDESIDVAVQLGIDAKKSDQVVRGSVVLPAGTGKSVRVAVFAQGEKAEQARAAGAEVVGMEDLAEQVKAGKLDFDIVIASPDTMRVVGTLGQILGPRGLMPNPKVGTVTPDVATAVKNAKAGQVQFRVDKAGIIHATIGRASFEPTALRSNLNALVDALQKAKPATSKGVYLRKVALSSTMGVGVRVDQASIAAQ.

Belongs to the universal ribosomal protein uL1 family. Part of the 50S ribosomal subunit.

In terms of biological role, binds directly to 23S rRNA. The L1 stalk is quite mobile in the ribosome, and is involved in E site tRNA release. Protein L1 is also a translational repressor protein, it controls the translation of the L11 operon by binding to its mRNA. This is Large ribosomal subunit protein uL1 from Paraburkholderia phytofirmans (strain DSM 17436 / LMG 22146 / PsJN) (Burkholderia phytofirmans).